The primary structure comprises 23 residues: AWVDWEDQILQDTVPLVNFVRMI.

Its subcellular location is the plastid. It is found in the chloroplast. Functionally, has a function in the early stage of chloroplast development and palisade cell morphogenesis. In Pseudotsuga menziesii (Douglas-fir), this protein is Protein DCL, chloroplastic.